The chain runs to 222 residues: Glutathione S-transferase A6 (222 aa).

Residues 3–83 (EKPLFHYDEA…YFSSKYNLYG (81 aa)) enclose the GST N-terminal domain. Residues tyrosine 9, arginine 45, 54–55 (QV), and 67–68 (QT) each bind glutathione. Positions 85-208 (DMKERALIDM…QPGSQRQPPV (124 aa)) constitute a GST C-terminal domain.

The protein belongs to the GST superfamily. Alpha family. As to quaternary structure, homodimer or heterodimer of GSTA1 and GSTA2.

Its subcellular location is the cytoplasm. It catalyses the reaction RX + glutathione = an S-substituted glutathione + a halide anion + H(+). Its function is as follows. Conjugation of reduced glutathione to a wide number of exogenous and endogenous hydrophobic electrophiles. The sequence is that of Glutathione S-transferase A6 (Gsta6) from Rattus norvegicus (Rat).